Reading from the N-terminus, the 501-residue chain is Raftlin-2 (501 aa).

2 disordered regions span residues 1 to 20 (MGCGLRKLEDPDDSSPGKIF) and 196 to 239 (SWNE…RKGE). The N-myristoyl glycine moiety is linked to residue glycine 2. Cysteine 3 carries S-palmitoyl cysteine lipidation. A compositionally biased stretch (polar residues) spans 220–233 (GQYQMEQNGSPTSS). Residue serine 405 is modified to Phosphoserine. The interval 407-449 (AQTPDKKASRHIKGEDKNKATSRSIGLDTTSSQPAESRHLPEE) is disordered. The residue at position 409 (threonine 409) is a Phosphothreonine. Residues 410-425 (PDKKASRHIKGEDKNK) are compositionally biased toward basic and acidic residues. Residues 427–441 (TSRSIGLDTTSSQPA) show a composition bias toward polar residues. Serine 430 carries the post-translational modification Phosphoserine.

Belongs to the raftlin family.

It localises to the cell membrane. In terms of biological role, upon bacterial lipopolysaccharide stimulation, mediates clathrin-dependent internalization of TLR4 in dendritic cells, resulting in activation of TICAM1-mediated signaling and subsequent IFNB1 production. May regulate B-cell antigen receptor-mediated signaling. This Homo sapiens (Human) protein is Raftlin-2 (RFTN2).